Here is a 519-residue protein sequence, read N- to C-terminus: 2-isopropylmalate synthase (519 aa).

Residues 12 to 274 (VVIFDTTLRD…WCNVESTMLT (263 aa)) form the Pyruvate carboxyltransferase domain. Positions 21, 209, 211, and 245 each coordinate Mn(2+). The interval 398 to 519 (KLSSLTVIAG…QRDVPAAAAS (122 aa)) is regulatory domain.

It belongs to the alpha-IPM synthase/homocitrate synthase family. LeuA type 1 subfamily. In terms of assembly, homodimer. Mn(2+) is required as a cofactor.

The protein resides in the cytoplasm. It catalyses the reaction 3-methyl-2-oxobutanoate + acetyl-CoA + H2O = (2S)-2-isopropylmalate + CoA + H(+). Its pathway is amino-acid biosynthesis; L-leucine biosynthesis; L-leucine from 3-methyl-2-oxobutanoate: step 1/4. In terms of biological role, catalyzes the condensation of the acetyl group of acetyl-CoA with 3-methyl-2-oxobutanoate (2-ketoisovalerate) to form 3-carboxy-3-hydroxy-4-methylpentanoate (2-isopropylmalate). The sequence is that of 2-isopropylmalate synthase from Nitrobacter winogradskyi (strain ATCC 25391 / DSM 10237 / CIP 104748 / NCIMB 11846 / Nb-255).